Here is a 141-residue protein sequence, read N- to C-terminus: Cystatin (141 aa).

The N-terminal stretch at 1–26 (MVHSQLPVAGPLRLLCALLLLPSATM) is a signal peptide. One can recognise a Cystatin domain in the interval 29–129 (GGLSPRSVTD…CHFQVWSRPW (101 aa)). Positions 73–77 (QVVSG) match the Secondary area of contact motif. Disulfide bonds link Cys-91-Cys-107 and Cys-120-Cys-140.

The protein belongs to the cystatin family. As to expression, expressed at a low level by the venom gland (at protein level).

The protein resides in the secreted. In terms of biological role, inhibits various C1 cysteine proteases including cathepsin L, papain and cathepsin B. This protein has no toxic activity and its function in the venom is unknown. It may play a role as a housekeeping or regulatory protein. The polypeptide is Cystatin (Pseudechis australis (Mulga snake)).